A 371-amino-acid chain; its full sequence is Chaperone protein DnaJ (371 aa).

The region spanning 4–68 (DYYQILGVSK…QKRAAYDRFG (65 aa)) is the J domain. Residues 134 to 212 (GIEKNISFSS…CHGMGRYHKQ (79 aa)) form a CR-type zinc finger. The Zn(2+) site is built by Cys147, Cys150, Cys164, Cys167, Cys186, Cys189, Cys200, and Cys203. CXXCXGXG motif repeat units follow at residues 147 to 154 (CDTCHGTG), 164 to 171 (CDACGGVG), 186 to 193 (CHKCQGNG), and 200 to 207 (CKKCHGMG).

This sequence belongs to the DnaJ family. Homodimer. Zn(2+) serves as cofactor.

The protein localises to the cytoplasm. Participates actively in the response to hyperosmotic and heat shock by preventing the aggregation of stress-denatured proteins and by disaggregating proteins, also in an autonomous, DnaK-independent fashion. Unfolded proteins bind initially to DnaJ; upon interaction with the DnaJ-bound protein, DnaK hydrolyzes its bound ATP, resulting in the formation of a stable complex. GrpE releases ADP from DnaK; ATP binding to DnaK triggers the release of the substrate protein, thus completing the reaction cycle. Several rounds of ATP-dependent interactions between DnaJ, DnaK and GrpE are required for fully efficient folding. Also involved, together with DnaK and GrpE, in the DNA replication of plasmids through activation of initiation proteins. In Rickettsia felis (strain ATCC VR-1525 / URRWXCal2) (Rickettsia azadi), this protein is Chaperone protein DnaJ.